Here is a 202-residue protein sequence, read N- to C-terminus: Tetratricopeptide repeat protein 36 (202 aa).

TPR repeat units follow at residues 49-82, 83-116, and 121-154; these read AQDL…LPER, ASAY…SGIA, and RQAL…GSDF.

This sequence belongs to the TTC36 family.

The chain is Tetratricopeptide repeat protein 36 (ttc36) from Xenopus tropicalis (Western clawed frog).